The sequence spans 118 residues: Beta-2-microglobulin (118 aa).

A signal peptide spans 1-21; that stretch reads MGSRWGIAVLGLFCFVSCLEA. An Ig-like C1-type domain is found at 26-113; it reads PKIQVYSRHP…VHEGVKKTVK (88 aa). A disulfide bridge connects residues Cys46 and Cys101.

This sequence belongs to the beta-2-microglobulin family. Heterodimer of an alpha chain and a beta chain. Beta-2-microglobulin is the beta-chain of major histocompatibility complex class I molecules.

Its subcellular location is the secreted. In terms of biological role, component of the class I major histocompatibility complex (MHC). Involved in the presentation of peptide antigens to the immune system. In Ornithorhynchus anatinus (Duckbill platypus), this protein is Beta-2-microglobulin (B2M).